Here is a 506-residue protein sequence, read N- to C-terminus: Probable Xaa-Pro aminopeptidase BDBG_08406 (506 aa).

Residues D285, D296, E433, and E471 each coordinate Mn(2+).

This sequence belongs to the peptidase M24B family. Requires Mn(2+) as cofactor.

It carries out the reaction Release of any N-terminal amino acid, including proline, that is linked to proline, even from a dipeptide or tripeptide.. Catalyzes the removal of a penultimate prolyl residue from the N-termini of peptides. The protein is Probable Xaa-Pro aminopeptidase BDBG_08406 of Blastomyces gilchristii (strain SLH14081) (Blastomyces dermatitidis).